An 888-amino-acid polypeptide reads, in one-letter code: Bifunctional uridylyltransferase/uridylyl-removing enzyme (888 aa).

A uridylyltransferase region spans residues 1–348 (MATTTDKQVS…YHFAEDKIEP (348 aa)). The tract at residues 349–709 (INPRFRIINN…LQPTTSRGAT (361 aa)) is uridylyl-removing. The HD domain maps to 468-590 (VDEHTILVIR…VGTQQRLDYL (123 aa)). 2 ACT domains span residues 710–787 (ELII…DDTM) and 817–888 (ELSI…NIEQ).

The protein belongs to the GlnD family. Mg(2+) serves as cofactor.

It catalyses the reaction [protein-PII]-L-tyrosine + UTP = [protein-PII]-uridylyl-L-tyrosine + diphosphate. The enzyme catalyses [protein-PII]-uridylyl-L-tyrosine + H2O = [protein-PII]-L-tyrosine + UMP + H(+). With respect to regulation, uridylyltransferase (UTase) activity is inhibited by glutamine, while glutamine activates uridylyl-removing (UR) activity. Functionally, modifies, by uridylylation and deuridylylation, the PII regulatory proteins (GlnB and homologs), in response to the nitrogen status of the cell that GlnD senses through the glutamine level. Under low glutamine levels, catalyzes the conversion of the PII proteins and UTP to PII-UMP and PPi, while under higher glutamine levels, GlnD hydrolyzes PII-UMP to PII and UMP (deuridylylation). Thus, controls uridylylation state and activity of the PII proteins, and plays an important role in the regulation of nitrogen assimilation and metabolism. In Hydrogenovibrio crunogenus (strain DSM 25203 / XCL-2) (Thiomicrospira crunogena), this protein is Bifunctional uridylyltransferase/uridylyl-removing enzyme.